The primary structure comprises 365 residues: Mitogen-activated protein kinase p38b (365 aa).

Positions 24–311 constitute a Protein kinase domain; that stretch reads YQNLQPVGQG…AEQALAHPYM (288 aa). Residues 30–38 and Lys-53 contribute to the ATP site; that span reads VGQGAYGQV. Residue Asp-153 is the Proton acceptor of the active site. Thr-183 is subject to Phosphothreonine. Residues 183 to 185 carry the TXY motif; the sequence is TGY. At Tyr-185 the chain carries Phosphotyrosine.

The protein belongs to the protein kinase superfamily. CMGC Ser/Thr protein kinase family. MAP kinase subfamily. Requires Mg(2+) as cofactor. Post-translationally, dually phosphorylated on Thr-183 and Tyr-185, which activates the enzyme. In terms of tissue distribution, at mid-embryogenesis, highest expression is seen in developing anterior and posterior midguts. Almost ubiquitous expression throughout all development.

The protein localises to the nucleus. The enzyme catalyses L-seryl-[protein] + ATP = O-phospho-L-seryl-[protein] + ADP + H(+). The catalysed reaction is L-threonyl-[protein] + ATP = O-phospho-L-threonyl-[protein] + ADP + H(+). Activated by threonine and tyrosine phosphorylation by Mkk3. Kinase involved in dpp signal transduction pathway in the process of wing morphogenesis when the levels of dpp are enhanced or inhibited. May down-regulate insect immunity gene expression after prolonged infection. The polypeptide is Mitogen-activated protein kinase p38b (Drosophila melanogaster (Fruit fly)).